Here is a 146-residue protein sequence, read N- to C-terminus: Hemoglobin subunit beta (146 aa).

Valine 1 is subject to N-acetylvaline. Positions 2–146 constitute a Globin domain; the sequence is HLTDAEKAAV…VATALAHKYH (145 aa). Residue serine 44 is modified to Phosphoserine. An N6-acetyllysine modification is found at lysine 59. Residue histidine 63 coordinates heme b. An N6-acetyllysine modification is found at lysine 82. Position 92 (histidine 92) interacts with heme b. Cysteine 93 is subject to S-nitrosocysteine. At lysine 144 the chain carries N6-acetyllysine.

Belongs to the globin family. Heterotetramer of two alpha chains and two beta chains. As to expression, red blood cells.

Its function is as follows. Involved in oxygen transport from the lung to the various peripheral tissues. This is Hemoglobin subunit beta (HBB) from Spalax ehrenbergi (Middle East blind mole rat).